We begin with the raw amino-acid sequence, 359 residues long: MANILLLLHPTVVTDQHLVENVKADIRKSVGDAHVEQHIIDRVTRGEVELTRNTYDKIIYINPNVHNRSIPASLMKLVYETLIDEGEFSGDLPTDQALDVLMTGFIVSDTNDQCWIKPKPIESVSIPLRRKGKKTDASVSASSGTTALPLFKKLSSNSNNNNNSSSPIGLTDSSAANTDEETDEANVMKRKLDAAKLTYFSDSDSENEEDENDDIINEDDLIKDSNQLDLRSRLIIPKSCEIPNGKKRRKACKDCTCGLKEIEEQEEAQQRSLQDSILGKMAQSATLEAIKIEERLKRQPVKFKDEDLAEIDFTVEGKTGGCGSCALGDAFRCDGCPYLGMPPFKPGEIVSIDSLGEDL.

The segment at 1–159 is N-terminal SAM-like domain; that stretch reads MANILLLLHP…LFKKLSSNSN (159 aa). The interval 152–187 is disordered; it reads KKLSSNSNNNNNSSSPIGLTDSSAANTDEETDEANV. Positions 155 to 166 are enriched in low complexity; the sequence is SSNSNNNNNSSS. Positions 159–228 are linker; sequence NNNNNSSSPI…DDLIKDSNQL (70 aa). The segment covering 167–177 has biased composition (polar residues); it reads PIGLTDSSAAN. [2Fe-2S] cluster contacts are provided by Cys-240, Cys-252, Cys-255, and Cys-257. A fe-S binding site A region spans residues 240 to 257; it reads CEIPNGKKRRKACKDCTC. Residues Cys-322, Cys-325, Cys-333, and Cys-336 each coordinate [4Fe-4S] cluster. 2 short sequence motifs (cx2C motif) span residues 322–325 and 333–336; these read CGSC and CDGC. A fe-S binding site B region spans residues 322 to 336; the sequence is CGSCALGDAFRCDGC.

This sequence belongs to the anamorsin family. In terms of assembly, monomer. Interacts with TAH18. Interacts with MIA40. [2Fe-2S] cluster serves as cofactor. It depends on [4Fe-4S] cluster as a cofactor.

The protein resides in the cytoplasm. The protein localises to the mitochondrion intermembrane space. Its function is as follows. Component of the cytosolic iron-sulfur (Fe-S) protein assembly (CIA) machinery required for the maturation of extramitochondrial Fe-S proteins. Part of an electron transfer chain functioning in an early step of cytosolic Fe-S biogenesis, facilitating the de novo assembly of a [4Fe-4S] cluster on the scaffold complex CFD1-NBP35. Electrons are transferred to DRE2 from NADPH via the FAD- and FMN-containing protein TAH18. TAH18-DRE2 are also required for the assembly of the diferric tyrosyl radical cofactor of ribonucleotide reductase (RNR), probably by providing electrons for reduction during radical cofactor maturation in the catalytic small subunit RNR2. This Scheffersomyces stipitis (strain ATCC 58785 / CBS 6054 / NBRC 10063 / NRRL Y-11545) (Yeast) protein is Fe-S cluster assembly protein DRE2.